The primary structure comprises 586 residues: Madf and zinc finger protein 1 (586 aa).

Residues 161–194 (FMSEDDLAPPRKPGRPPRRTRPGQVFKFKVSFIR) form an involved in interaction with Cp190 region. A DNA-binding region (MADF 1) is located at residues 201–292 (HLIQAYKEHP…KCEFLSVAPV (92 aa)). Residues 294–319 (TPRENEEDNDLTAIKLNFKEENLITT) form an involved in interaction with Cp190 region. The segment at residues 320 to 413 (SFIETYANYP…MCSFLPAKGS (94 aa)) is a DNA-binding region (MADF 2). 6 consecutive C2H2-type zinc fingers follow at residues 418–441 (LYCD…VKAH), 448–471 (YLCS…LRSH), 476–498 (LKCQ…TLIH), 504–527 (HVCD…NGVH), 533–555 (YSCN…IKGH), and 561–583 (KKCE…RRSH).

In terms of assembly, interacts (via regions flanking MADF domain 1) with Cp190 (via regions between the BTB domain and first zinc finger domain); the interaction is probably direct and is essential for protein function.

It localises to the nucleus. Its subcellular location is the chromosome. The protein resides in the nucleoplasm. Its function is as follows. Chromatin-binding protein involved in the organization of active promoters and insulators. Essential for the activity of heterochromatin promoters; primarily binds to specific motifs within promoters of housekeeping genes. May also associate to a lesser extent with promoters in euchromatin. Mediates recruitment of Cp190, a multifunctional protein involved in the recruitment of transcription complexes, the creation of open chromatin regions and the activity of insulators. Cooperates with pita and su(Hw) to recruit Cp190 and regulate insulator function at the front-ultraabdominal (Fub) boundary. May cooperate with other C2H2 zinc finger proteins, such as M1BP, to recruit CP190 to promoters. May be involved in cellular organization and development of the eye. This Drosophila melanogaster (Fruit fly) protein is Madf and zinc finger protein 1.